The sequence spans 205 residues: Outer-membrane lipoprotein carrier protein (205 aa).

The signal sequence occupies residues 1 to 22 (MKKIVIVISILLTSFLSSAVSA).

The protein belongs to the LolA family. Monomer.

Its subcellular location is the periplasm. Participates in the translocation of lipoproteins from the inner membrane to the outer membrane. Only forms a complex with a lipoprotein if the residue after the N-terminal Cys is not an aspartate (The Asp acts as a targeting signal to indicate that the lipoprotein should stay in the inner membrane). The protein is Outer-membrane lipoprotein carrier protein of Psychromonas ingrahamii (strain DSM 17664 / CCUG 51855 / 37).